Here is a 287-residue protein sequence, read N- to C-terminus: Ventral anterior homeobox 1b (287 aa).

A compositionally biased stretch (basic and acidic residues) spans 1 to 33 (MFEKTRDMDVRCNIEENGRISKPKDNKEIRESQ). Positions 1 to 55 (MFEKTRDMDVRCNIEENGRISKPKDNKEIRESQSKMPSTYPAPGSSEGCAKNKSS) are disordered. The homeobox DNA-binding region spans 89 to 148 (PKRTRTSFTAEQLYRLEMEFQRCQYVVGRERTELARQLNLSETQVKVWFQNRRTKQKKDQ).

This sequence belongs to the EMX homeobox family.

The protein localises to the nucleus. In terms of biological role, involved in ventral eye development. The chain is Ventral anterior homeobox 1b (vax1-b) from Xenopus laevis (African clawed frog).